The following is a 357-amino-acid chain: FPYQGSSIMLESGKVNDYEVVYPRKVTALPKGAVQQKYEDTMQYEFKVNGEPVVLHLEKNKGLFSKDYSEIHYSPDGRRITTHPLVEGHCYYRGHIRNDADSTASISACNGLKGHFKIQGETYFIESLKLSDSEAHAVFKYENVEKEDEAHKMCGVTQNWESYEPIKKASQLIVSTEFQRYMEIVIVVDHSMYTKYKGDSDKIKAWVYEMINTISESYRYLYIDIIVSALEMWSEKDLINVETSAENTLKSFGEWRAKDLIHRISHDNAQLLTATDFDGPTIGLAYVASMCDPKRSVGVVQDHSSVNHLVAITLAHEIAHNLGVHHDEGSCSCGSGYTCIMSPVINSEVIKYFLDSK.

A signal peptide spans 1-6 (FPYQGS). The propeptide occupies 7–176 (SIMLESGKVN…KKASQLIVST (170 aa)). The Peptidase M12B domain maps to 180-357 (RYMEIVIVVD…EVIKYFLDSK (178 aa)). His316 is a binding site for Zn(2+). The active site involves Glu317. The Zn(2+) site is built by His320 and His326. Cys333 and Cys339 form a disulfide bridge.

This sequence belongs to the venom metalloproteinase (M12B) family. P-I subfamily. Monomer. Zn(2+) serves as cofactor. In terms of tissue distribution, expressed by the venom gland.

The protein localises to the secreted. Functionally, snake venom metalloproteinase that impairs hemostasis in the envenomed animal. This Deinagkistrodon acutus (Hundred-pace snake) protein is Snake venom metalloproteinase H4.